The following is a 335-amino-acid chain: Foldase protein PrsA (335 aa).

Residues 1-20 (MKKKIFAGAVTLLSVAVLAA) form the signal peptide. A lipid anchor (N-palmitoyl cysteine) is attached at Cys-21. Cys-21 is lipidated: S-diacylglycerol cysteine. The PpiC domain occupies 142–239 (TPEVTAQIIK…ASYYIVKLVK (98 aa)). A disordered region spans residues 300–335 (TGSSTSSSSAASSSKTSESSSAAESSSKEASSSAAE). Over residues 302–335 (SSTSSSSAASSSKTSESSSAAESSSKEASSSAAE) the composition is skewed to low complexity.

Belongs to the PrsA family.

It is found in the cell membrane. The catalysed reaction is [protein]-peptidylproline (omega=180) = [protein]-peptidylproline (omega=0). Its function is as follows. Plays a major role in protein secretion by helping the post-translocational extracellular folding of several secreted proteins. The protein is Foldase protein PrsA of Streptococcus sanguinis (strain SK36).